A 2265-amino-acid chain; its full sequence is Collagen alpha-6(VI) chain (2265 aa).

The signal sequence occupies residues 1 to 18 (MLLVLCLTMICFHVCVNQ). The interval 19–1390 (DSGPEYADVV…TCCCLLCKCT (1372 aa)) is nonhelical region. VWFA domains lie at 26 to 205 (DVVF…IKDV), 228 to 406 (DVVF…LKKL), 435 to 605 (DIYL…RNQV), 621 to 790 (DIMF…EDDL), 808 to 981 (DVVF…FSDV), 999 to 1170 (DLVF…KKRI), and 1186 to 1378 (DVVV…INVA). N-linked (GlcNAc...) asparagine glycans are attached at residues Asn-197, Asn-238, and Asn-346. N-linked (GlcNAc...) asparagine glycosylation occurs at Asn-760. The interval 1391 to 1724 (GGDGAMGDPG…GRKGVKGARG (334 aa)) is triple-helical region. Residues 1398–1722 (DPGSAGKKGP…PPGRKGVKGA (325 aa)) form a disordered region. Positions 1455-1470 (EEGEVGEDGLDGLDGE) are enriched in acidic residues. A compositionally biased stretch (basic and acidic residues) spans 1497 to 1507 (AAGDRGAKGLR). Positions 1507–1509 (RGD) match the Cell attachment site motif. Residues 1546 to 1558 (SRRKMVVHGRRGH) are compositionally biased toward basic residues. A nonhelical region region spans residues 1725–2265 (LASFSTCDLI…ATSKLGKRSA (541 aa)). VWFA domains follow at residues 1756-1936 (ELVF…ERLQ) and 1964-2165 (DTAF…INSI). The interval 2186–2205 (SRDLKPPPRQFRSFVPGPQK) is disordered.

It belongs to the type VI collagen family. As to quaternary structure, trimers composed of three different chains: alpha-1(VI), alpha-2(VI), and alpha-3(VI) or alpha-4(VI) or alpha-5(VI) or alpha-6(VI). Prolines at the third position of the tripeptide repeating unit (G-X-Y) are hydroxylated in some or all of the chains. As to expression, in newborn, it is expressed in lung, heart, kidney, muscle, brain, intestine, skin, femur and sternum. In adult, it is expressed in lung, heart, muscle, ovary, brain, liver and sternum.

It is found in the secreted. It localises to the extracellular space. The protein localises to the extracellular matrix. Collagen VI acts as a cell-binding protein. This is Collagen alpha-6(VI) chain (Col6a6) from Mus musculus (Mouse).